Consider the following 322-residue polypeptide: 4-hydroxy-3-methylbut-2-enyl diphosphate reductase 1 (322 aa).

Cys-18 provides a ligand contact to [4Fe-4S] cluster. (2E)-4-hydroxy-3-methylbut-2-enyl diphosphate contacts are provided by His-47 and His-82. Residues His-47 and His-82 each coordinate dimethylallyl diphosphate. Residues His-47 and His-82 each contribute to the isopentenyl diphosphate site. [4Fe-4S] cluster is bound at residue Cys-104. His-132 provides a ligand contact to (2E)-4-hydroxy-3-methylbut-2-enyl diphosphate. His-132 lines the dimethylallyl diphosphate pocket. An isopentenyl diphosphate-binding site is contributed by His-132. Glu-134 serves as the catalytic Proton donor. Thr-173 provides a ligand contact to (2E)-4-hydroxy-3-methylbut-2-enyl diphosphate. Cys-203 is a binding site for [4Fe-4S] cluster. Residues Ser-231, Ser-232, Asn-233, and Ser-276 each coordinate (2E)-4-hydroxy-3-methylbut-2-enyl diphosphate. Dimethylallyl diphosphate-binding residues include Ser-231, Ser-232, Asn-233, and Ser-276. Positions 231, 232, 233, and 276 each coordinate isopentenyl diphosphate.

This sequence belongs to the IspH family. The cofactor is [4Fe-4S] cluster.

The catalysed reaction is isopentenyl diphosphate + 2 oxidized [2Fe-2S]-[ferredoxin] + H2O = (2E)-4-hydroxy-3-methylbut-2-enyl diphosphate + 2 reduced [2Fe-2S]-[ferredoxin] + 2 H(+). It catalyses the reaction dimethylallyl diphosphate + 2 oxidized [2Fe-2S]-[ferredoxin] + H2O = (2E)-4-hydroxy-3-methylbut-2-enyl diphosphate + 2 reduced [2Fe-2S]-[ferredoxin] + 2 H(+). It participates in isoprenoid biosynthesis; dimethylallyl diphosphate biosynthesis; dimethylallyl diphosphate from (2E)-4-hydroxy-3-methylbutenyl diphosphate: step 1/1. The protein operates within isoprenoid biosynthesis; isopentenyl diphosphate biosynthesis via DXP pathway; isopentenyl diphosphate from 1-deoxy-D-xylulose 5-phosphate: step 6/6. Functionally, catalyzes the conversion of 1-hydroxy-2-methyl-2-(E)-butenyl 4-diphosphate (HMBPP) into a mixture of isopentenyl diphosphate (IPP) and dimethylallyl diphosphate (DMAPP). Acts in the terminal step of the DOXP/MEP pathway for isoprenoid precursor biosynthesis. The chain is 4-hydroxy-3-methylbut-2-enyl diphosphate reductase 1 from Bradyrhizobium diazoefficiens (strain JCM 10833 / BCRC 13528 / IAM 13628 / NBRC 14792 / USDA 110).